The following is a 59-amino-acid chain: Large ribosomal subunit protein bL32c (59 aa).

The protein belongs to the bacterial ribosomal protein bL32 family.

The protein localises to the plastid. It is found in the chloroplast. The polypeptide is Large ribosomal subunit protein bL32c (Physcomitrium patens (Spreading-leaved earth moss)).